The following is a 938-amino-acid chain: ATP-dependent RNA helicase DDX42 (938 aa).

Gly residues predominate over residues 1–18; that stretch reads MNWNKGGPGTKRGFGFGG. The interval 1 to 114 is disordered; it reads MNWNKGGPGT…KPVDSDSDDD (114 aa). K5 bears the N6-acetyllysine mark. The residue at position 12 (R12) is an Omega-N-methylarginine. A compositionally biased stretch (low complexity) spans 35 to 52; that stretch reads SHSAFGATSSSSGFGKSA. S58 carries the post-translational modification Phosphoserine. Residues 70–84 are compositionally biased toward acidic residues; the sequence is DEENAYFEDEEEDSS. S96, S104, S109, and S111 each carry phosphoserine. The stretch at 116 to 157 forms a coiled coil; sequence LEAFMAEVEDQAARDMKRLEEKDKERKNVKGIRDDIEEEDDQ. Residues 182 to 203 are disordered; sequence EYDSDGNPIAPTKKIIDPLPPI. At S185 the chain carries Phosphoserine. The Q motif signature appears at 253–281; that stretch reads SSFAHFGFDEQLMHQIRKSEYTQPTPIQC. Positions 284–459 constitute a Helicase ATP-binding domain; that stretch reads VPVALSGRDM…RDILIDPIRV (176 aa). 297 to 304 contributes to the ATP binding site; the sequence is AKTGSGKT. The short motif at 407–410 is the DEAD box element; sequence DEAD. The Helicase C-terminal domain occupies 487 to 632; that stretch reads WLTRRLVEFT…HVSKELLDLA (146 aa). 2 stretches are compositionally biased toward polar residues: residues 737–757 and 786–798; these read LNSVPTNSAQQGHNSPDSPVT and GVNNTASGNNSRE. Residues 737 to 938 are disordered; sequence LNSVPTNSAQ…PKRKKSRWDS (202 aa). The necessary for interaction with TP53BP2 stretch occupies residues 738-833; it reads NSVPTNSAQQ…TGNRHSDSPR (96 aa). Position 754 is a phosphoserine (S754). Positions 820 to 920 are enriched in basic and acidic residues; sequence SHGETGNRHS…KVDSKTDKTA (101 aa). K899 is covalently cross-linked (Glycyl lysine isopeptide (Lys-Gly) (interchain with G-Cter in SUMO2)).

This sequence belongs to the DEAD box helicase family. DDX42 subfamily. As to quaternary structure, transient component of the SF3B subcomplex of the 17S U2 SnRNP complex. Interacts (via the C-terminus) with TP53BP2; the interaction is not inhibitied by TP53BP2 ubiquitination and is independent of p53/TP53. Expressed in several cell lines (at protein level). Expressed in liver, lung, tonsil, thymus, muscle and pancreatic islets.

Its subcellular location is the cytoplasm. It localises to the nucleus. The protein localises to the cajal body. The protein resides in the nucleus speckle. It carries out the reaction ATP + H2O = ADP + phosphate + H(+). In terms of biological role, ATP-dependent RNA helicase that binds to partially double-stranded RNAs (dsRNAs) in order to unwind RNA secondary structures. Unwinding is promoted in the presence of single-strand binding proteins. Also mediates RNA duplex formation thereby displacing the single-strand RNA binding protein. ATP and ADP modulate its activity: ATP binding and hydrolysis by DDX42 triggers RNA strand separation, whereas the ADP-bound form of the protein triggers annealing of complementary RNA strands. Required for assembly of the 17S U2 SnRNP complex of the spliceosome, a large ribonucleoprotein complex that removes introns from transcribed pre-mRNAs: DDX42 associates transiently with the SF3B subcomplex of the 17S U2 SnRNP complex and is released after fulfilling its role in the assembly of 17S U2 SnRNP. Involved in the survival of cells by interacting with TP53BP2 and thereby counteracting the apoptosis-stimulating activity of TP53BP2. Relocalizes TP53BP2 to the cytoplasm. This Homo sapiens (Human) protein is ATP-dependent RNA helicase DDX42.